Consider the following 364-residue polypeptide: MHITQLVLRHFRCFDVVDFFPLPGLNFFIGENGSGKTSLLEAVHLMGYGRSFRGRVRDGLIRHGSENLEIFVDWQETALINARRHRAGLSHYGQEWIGRLDGQKIIHLASLCAALAVITFESSSYQLINSNAELRRRFLDWGLFHVEPDFLDLWRCYTHVLKQRNSLLKQKEELAMLEAWDQKLSEVGEQLTFRRFQYLERLKQRVIPLISRITPNLKIHGFNFNHGWRRHELPLIDALFISRERDYQYGYTSLGPHRSDWTPQFSSIPGVHVLSRGQGKLITLMCLLAQAQDFFDQRGEWPILSLDDLASELDQKHQWRVLEMLAEIPAQVLITGTEIPQGLKPFFSVGAMFHVEHGAITRMF.

30 to 37 is a binding site for ATP; the sequence is GENGSGKT.

Belongs to the RecF family.

It localises to the cytoplasm. Its function is as follows. The RecF protein is involved in DNA metabolism; it is required for DNA replication and normal SOS inducibility. RecF binds preferentially to single-stranded, linear DNA. It also seems to bind ATP. This chain is DNA replication and repair protein RecF, found in Xylella fastidiosa (strain M12).